Reading from the N-terminus, the 157-residue chain is UPF0251 protein CLJ_B1488 (157 aa).

This sequence belongs to the UPF0251 family.

This Clostridium botulinum (strain 657 / Type Ba4) protein is UPF0251 protein CLJ_B1488.